Reading from the N-terminus, the 261-residue chain is Carnitinyl-CoA dehydratase (261 aa).

Catalysis depends on Glu111, which acts as the Nucleophile. Glu131 acts as the Proton acceptor in catalysis.

This sequence belongs to the enoyl-CoA hydratase/isomerase family.

The catalysed reaction is (R)-carnitinyl-CoA = crotonobetainyl-CoA + H2O. It functions in the pathway amine and polyamine metabolism; carnitine metabolism. Functionally, catalyzes the reversible dehydration of L-carnitinyl-CoA to crotonobetainyl-CoA. This chain is Carnitinyl-CoA dehydratase, found in Salmonella typhi.